Here is a 372-residue protein sequence, read N- to C-terminus: N-methyl-L-tryptophan oxidase (372 aa).

4–34 (DLIIIGSGSVGAAAGYYATRAGLKVLMTDAH) is a binding site for FAD. Position 307 is an S-8alpha-FAD cysteine (cysteine 307).

This sequence belongs to the MSOX/MTOX family. MTOX subfamily. Monomer. FAD is required as a cofactor.

The catalysed reaction is N(alpha)-methyl-L-tryptophan + O2 + H2O = L-tryptophan + formaldehyde + H2O2. Its function is as follows. Catalyzes the oxidative demethylation of N-methyl-L-tryptophan. The polypeptide is N-methyl-L-tryptophan oxidase (Salmonella agona (strain SL483)).